Consider the following 985-residue polypeptide: Regulator of telomere elongation helicase 1 homolog (985 aa).

The Helicase ATP-binding domain occupies 7 to 303 (AGIPVHFPFE…QDMAGDEPKD (297 aa)). 42–49 (SPTGTGKT) lines the ATP pocket. [4Fe-4S] cluster contacts are provided by Cys-146, Cys-164, Cys-173, and Cys-209. A DEAH box motif is present at residues 252–255 (DEAH). Thr-874 is subject to Phosphothreonine.

The protein belongs to the helicase family. RAD3/XPD subfamily.

It is found in the nucleus. The enzyme catalyses ATP + H2O = ADP + phosphate + H(+). A probable ATP-dependent DNA helicase implicated in DNA repair and the maintenance of genomic stability. Acts as an anti-recombinase to counteract toxic recombination and limit crossover during meiosis. Regulates meiotic recombination and crossover homeostasis by physically dissociating strand invasion events and thereby promotes noncrossover repair by meiotic synthesis dependent strand annealing (SDSA) as well as disassembly of D loop recombination intermediates. This is Regulator of telomere elongation helicase 1 homolog from Drosophila erecta (Fruit fly).